A 629-amino-acid polypeptide reads, in one-letter code: Arginine--tRNA ligase (629 aa).

The 'HIGH' region motif lies at 128 to 138 (VNPTKPLHMGH).

This sequence belongs to the class-I aminoacyl-tRNA synthetase family.

The protein localises to the cytoplasm. The enzyme catalyses tRNA(Arg) + L-arginine + ATP = L-arginyl-tRNA(Arg) + AMP + diphosphate. The polypeptide is Arginine--tRNA ligase (Pyrococcus furiosus (strain ATCC 43587 / DSM 3638 / JCM 8422 / Vc1)).